The sequence spans 247 residues: TLC domain-containing protein 1 (247 aa).

An N-terminal signal peptide occupies residues 1–35; the sequence is MPRLLHPALPLLLGATLTFRALRRALCRLPLPVHV. Topologically, residues 36-46 are extracellular; that stretch reads RADPLRTWRWH. One can recognise a TLC domain in the interval 40–234; that stretch reads LRTWRWHNLL…LLRSDFCPEH (195 aa). The chain crosses the membrane as a helical span at residues 47–67; that stretch reads NLLVSFAHSIVSGIWALLCVW. Residues 68–83 are Cytoplasmic-facing; the sequence is QTPDMLVEIETAWSLS. A helical membrane pass occupies residues 84-104; the sequence is GYLLVCFSAGYFIHDTVDIVA. Over 105–123 the chain is Extracellular; the sequence is SGQTRASWEYLVHHVMAMG. Positions 124-144 form an intramembrane region, helical; sequence AFFSGIFWSSFVGGGVLTLLV. The Extracellular segment spans residues 145–173; sequence EVSNIFLTIRMMMKISNAQDHLLYRVNKY. Residues 174–194 form a helical membrane-spanning segment; that stretch reads VNLVMYFLFRLAPQAYLTHFF. Topologically, residues 195-201 are cytoplasmic; sequence LRYVNQR. Residues 202-222 form a helical membrane-spanning segment; sequence TLGTFLLGILLMLDVMIIIYF. Residues 223–247 lie on the Extracellular side of the membrane; it reads SRLLRSDFCPEHVPKKQHKDKFLTE.

It is found in the cell membrane. Regulates the composition and fluidity of the plasma membrane. Inhibits the incorporation of membrane-fluidizing phospholipids containing omega-3 long-chain polyunsaturated fatty acids (LCPUFA) and thereby promotes membrane rigidity. Does not appear to have any effect on LCPUFA synthesis. The chain is TLC domain-containing protein 1 (TLCD1) from Homo sapiens (Human).